Consider the following 505-residue polypeptide: Glycerol kinase (505 aa).

Residue Thr-14 coordinates ADP. Residues Thr-14, Thr-15, and Ser-16 each contribute to the ATP site. Sn-glycerol 3-phosphate is bound at residue Thr-14. Residue Arg-18 coordinates ADP. Sn-glycerol 3-phosphate contacts are provided by Arg-84, Glu-85, Tyr-136, and Asp-246. Arg-84, Glu-85, Tyr-136, Asp-246, and Gln-247 together coordinate glycerol. ADP-binding residues include Thr-268 and Gly-311. ATP is bound by residues Thr-268, Gly-311, Gln-315, and Gly-412. ADP-binding residues include Gly-412 and Asn-416.

The protein belongs to the FGGY kinase family.

It carries out the reaction glycerol + ATP = sn-glycerol 3-phosphate + ADP + H(+). Its pathway is polyol metabolism; glycerol degradation via glycerol kinase pathway; sn-glycerol 3-phosphate from glycerol: step 1/1. Inhibited by fructose 1,6-bisphosphate (FBP). Its function is as follows. Key enzyme in the regulation of glycerol uptake and metabolism. Catalyzes the phosphorylation of glycerol to yield sn-glycerol 3-phosphate. The protein is Glycerol kinase of Vibrio parahaemolyticus serotype O3:K6 (strain RIMD 2210633).